A 249-amino-acid polypeptide reads, in one-letter code: Uridylate kinase (249 aa).

K21–G24 lines the ATP pocket. G63 contributes to the UMP binding site. ATP contacts are provided by G64 and R68. UMP contacts are provided by residues D84 and T145–T152. Positions 172, 178, and 181 each coordinate ATP.

Belongs to the UMP kinase family. Homohexamer.

Its subcellular location is the cytoplasm. The enzyme catalyses UMP + ATP = UDP + ADP. It participates in pyrimidine metabolism; CTP biosynthesis via de novo pathway; UDP from UMP (UMPK route): step 1/1. Inhibited by UTP. Catalyzes the reversible phosphorylation of UMP to UDP. This is Uridylate kinase from Francisella tularensis subsp. holarctica (strain FTNF002-00 / FTA).